We begin with the raw amino-acid sequence, 217 residues long: Non-structural protein NS3 (217 aa).

Belongs to the orbivirus NS3 family.

In terms of biological role, may play a role in the release of virions from infected cells. This African horse sickness virus 6 (AHSV-6) protein is Non-structural protein NS3 (Segment-10).